A 26-amino-acid polypeptide reads, in one-letter code: Citropin-2.1.3 (26 aa).

As to expression, expressed by the dorsal and submental skin glands.

Its subcellular location is the secreted. This is Citropin-2.1.3 from Ranoidea citropa (Australian Blue Mountains tree frog).